Here is a 726-residue protein sequence, read N- to C-terminus: Endo-1,4-beta-xylanase/feruloyl esterase (726 aa).

The first 19 residues, 1 to 19, serve as a signal peptide directing secretion; that stretch reads MKKLLVALSLIAGSLTASA. Residues 27–369 form the GH10 domain; the sequence is YAAGPGLKDA…KRSLQIIRDF (343 aa). E161 (proton donor; for xylanase activity) is an active-site residue. Catalysis depends on E280, which acts as the Nucleophile; for xylanase activity. The interval 370–726 is feruloyl esterase; the sequence is DAAMDNRKPK…LEKMAQSLFK (357 aa). S629 serves as the catalytic Nucleophile; for esterase activity.

The protein in the N-terminal section; belongs to the glycosyl hydrolase 10 (cellulase F) family. As to quaternary structure, monomer or homodimer.

It catalyses the reaction Endohydrolysis of (1-&gt;4)-beta-D-xylosidic linkages in xylans.. The enzyme catalyses feruloyl-polysaccharide + H2O = ferulate + polysaccharide.. It participates in glycan degradation; xylan degradation. Functionally, involved in degradation of plant cell wall polysaccharides. Has endo-xylanase activity towards substrates such as oat spelt xylan (OSX), acetylated xylo-oligosaccharides and acetylated xylan, producing primarily xylobiose; cannot hydrolyze xylobiose to xylose. Also has feruloyl esterase activity, releasing ferulic acid from methylferulate, and from the more natural substrates wheat bran, corn fiber, and XOS(FA,Ac), a corn fiber-derived substrate enriched in O-acetyl and ferulic acid esters. Exhibits negligible acetyl esterase activity on sugar acetates. Acts synergistically with Xyl3A to increase the release of xylose from xylan. Does not possess endoglucanase or mannanase activities since it is not able to hydrolyze carboxymethyl cellulose and locust bean gum. The chain is Endo-1,4-beta-xylanase/feruloyl esterase from Xylanibacter ruminicola (strain ATCC 19189 / DSM 19721 / CIP 105475 / JCM 8958 / 23) (Prevotella ruminicola).